The primary structure comprises 221 residues: Probable septum site-determining protein MinC (221 aa).

This sequence belongs to the MinC family. In terms of assembly, interacts with MinD and FtsZ.

Cell division inhibitor that blocks the formation of polar Z ring septums. Rapidly oscillates between the poles of the cell to destabilize FtsZ filaments that have formed before they mature into polar Z rings. Prevents FtsZ polymerization. In Shewanella baltica (strain OS223), this protein is Probable septum site-determining protein MinC.